A 122-amino-acid polypeptide reads, in one-letter code: Non-virion protein (122 aa).

A disordered region spans residues 80–122; it reads VDTADPVPRAGPERTIQWGTDRDATEELASPAPEEIYEDNDSW.

This sequence belongs to the novirhabdovirus NV protein family.

Functionally, plays an essential role for the viral pathogenicity. The sequence is that of Non-virion protein (NV) from Gobiosoma bosc (Naked goby).